Reading from the N-terminus, the 429-residue chain is MPIIEQVGAREILDSRGNPTVEVELALTDGTFARAAVPSGASTGEHEAVELRDGGSRYGGKGVDKAVQAVLDDIAPAVIGMSADDQRLIDQALLDLDGTPDKSRLGANAILGVSLAVSKAAAESAGLPLFRYLGGPNAHILPVPMMNILNGGAHADTGVDVQEFMVAPIGAPSFKEALRWGAEVYHSLKSVLKKQGLSTGLGDEGGFAPDVAGTKAALDLISSAIEAAGFKLGTDVTLALDVAATEFYTEGTGYSFEKETRTAEQMAEFYASLLDAYPLVSIEDPLSEDDWDGWVSLTTQIGDRVQLVGDDLFVTNPERLEEGIERGAANALLVKVNQIGTLTETLDAVALAHNSGYRTMMSHRSGETEDTTIADLAVAVGSGQIKTGAPARSERVAKYNQLLRIEETLGDAARYAGDLAFPRFALETK.

Residue Gln162 participates in (2R)-2-phosphoglycerate binding. The active-site Proton donor is the Glu204. 3 residues coordinate Mg(2+): Asp241, Glu283, and Asp310. (2R)-2-phosphoglycerate-binding residues include Lys335, Arg364, Ser365, and Lys386. Lys335 serves as the catalytic Proton acceptor.

The protein belongs to the enolase family. It depends on Mg(2+) as a cofactor.

It is found in the cytoplasm. It localises to the secreted. The protein resides in the cell surface. The enzyme catalyses (2R)-2-phosphoglycerate = phosphoenolpyruvate + H2O. The protein operates within carbohydrate degradation; glycolysis; pyruvate from D-glyceraldehyde 3-phosphate: step 4/5. Catalyzes the reversible conversion of 2-phosphoglycerate (2-PG) into phosphoenolpyruvate (PEP). It is essential for the degradation of carbohydrates via glycolysis. The polypeptide is Enolase (Mycobacterium sp. (strain JLS)).